The following is a 188-amino-acid chain: XLVQPGVLIFCDDPSYNSMSDSTHLFTLHFVXYSENGSDSVYSLQFTSRSDCPAGSNKPWTECDYLSYERRFNERLSTGHKQVYCLLDDVIIPEKAPCLGCPMEVDENSEDLKFPLSVSISKAGALPTMFTRRRPPGWSPLRRKKPISCNATVYMTETEADTKDLNDLCVPDDQNAGYANCNSTVNVA.

N-linked (GlcNAc...) asparagine glycans are attached at residues asparagine 36, asparagine 150, and asparagine 182.

In terms of processing, bradykinin is released from kininogen by kallikrein. N-glycosylated. Contains O-acetylated sialic acids as terminal elements on biantennary and triantennary N-glycans.

In terms of biological role, inhibits papain and ficin (cysteine proteinases) but not trypsin (a serine proteinase). This is Kininogen from Anarhichas minor (Arctic spotted wolffish).